Consider the following 465-residue polypeptide: Na(+)-translocating NADH-quinone reductase subunit A (465 aa).

This sequence belongs to the NqrA family. In terms of assembly, composed of six subunits; NqrA, NqrB, NqrC, NqrD, NqrE and NqrF.

It carries out the reaction a ubiquinone + n Na(+)(in) + NADH + H(+) = a ubiquinol + n Na(+)(out) + NAD(+). In terms of biological role, NQR complex catalyzes the reduction of ubiquinone-1 to ubiquinol by two successive reactions, coupled with the transport of Na(+) ions from the cytoplasm to the periplasm. NqrA to NqrE are probably involved in the second step, the conversion of ubisemiquinone to ubiquinol. This is Na(+)-translocating NADH-quinone reductase subunit A from Chlamydia trachomatis serovar L2 (strain ATCC VR-902B / DSM 19102 / 434/Bu).